Reading from the N-terminus, the 712-residue chain is Dynamin-1-like protein drp-1 (712 aa).

One can recognise a Dynamin-type G domain in the interval 24–304; that stretch reads QIQLPQIVVV…LMHHIRNCLP (281 aa). The G1 motif stretch occupies residues 34–41; the sequence is GSQSAGKS. Residues 60–62 are G2 motif; that stretch reads VTR. The G3 motif stretch occupies residues 148–151; sequence DLPG. The tract at residues 217 to 220 is G4 motif; sequence TKLD. The G5 motif stretch occupies residues 247 to 250; sequence VNRS. An interaction with caspase ced-9 region spans residues 280–502; the sequence is SRNGTPYLAK…LAYINTKHPE (223 aa). The interval 523–542 is disordered; sequence GRSRNRHASTGERAVSAHGE. The GED domain occupies 620–711; the sequence is VAIIERLIRN…IISEVRETQV (92 aa).

The protein belongs to the TRAFAC class dynamin-like GTPase superfamily. Dynamin/Fzo/YdjA family. As to quaternary structure, interacts (via residues 280-502) with caspase ced-9; the interaction is enhanced by GTP rather than GDP; the interaction is probably direct and may occur at the mitochondrion. As to expression, highly expressed in neurons, in intestinal cells and in the body wall, pharyngeal, and vulval muscles.

It localises to the mitochondrion. The protein localises to the mitochondrion outer membrane. The protein resides in the cytoplasm. It is found in the cytosol. It catalyses the reaction GTP + H2O = GDP + phosphate + H(+). With respect to regulation, GTPase activity is increased by binding to phospholipid membranes. Its function is as follows. Functions in mitochondrial division. Functions in peroxisomal division. Mediates membrane fission, perhaps mainly of the mitochondrial outer membrane. Mitochondrial fission may be promoted by recruitment to mitochondrial membranes via the egl-1/ced-9 complex. Involved in the coordination of mitochondrial division with autophagy in response to acute heat stress during larval development. Plays a role in apoptosis by promoting mitochondrial elimination and cell-death execution, acting downstream of caspase ced-3, and perhaps independently of FIS1-related protein fis-2, caspase ced-9 and apoptosis-inducing factor AIFM/wah-1. Role in promoting apoptosis dependent upon cleavage of drp-1 by ced-3. Involved in negatively modulating longevity in concert with the Insulin/IGF-1-like signaling (IIS) mediated pathway. In Caenorhabditis elegans, this protein is Dynamin-1-like protein drp-1.